The chain runs to 66 residues: Small ribosomal subunit protein bS21 (66 aa).

Belongs to the bacterial ribosomal protein bS21 family.

The sequence is that of Small ribosomal subunit protein bS21 from Solidesulfovibrio magneticus (strain ATCC 700980 / DSM 13731 / RS-1) (Desulfovibrio magneticus).